The sequence spans 425 residues: COP9 signalosome complex subunit 1 (425 aa).

In terms of domain architecture, PCI spans 219-379 (ASSGVPPEIY…KSKALQTLEN (161 aa)).

This sequence belongs to the CSN1 family. As to quaternary structure, component of the COP9 signalosome (CSN) complex.

It localises to the cytoplasm. Its subcellular location is the nucleus. In terms of biological role, component of the COP9 signalosome (CSN) complex that acts as an regulator of the ubiquitin (Ubl) conjugation pathway by mediating the deneddylation of the cullin subunit of SCF-type E3 ubiquitin-protein ligase complexes. The CSN complex is involved in the regulation of the circadian clock through its control of the stability of the SCF(FWD-1) complex. The chain is COP9 signalosome complex subunit 1 (csn-1) from Neurospora crassa (strain ATCC 24698 / 74-OR23-1A / CBS 708.71 / DSM 1257 / FGSC 987).